The following is a 371-amino-acid chain: tRNA-specific 2-thiouridylase MnmA (371 aa).

ATP contacts are provided by residues 13–20 (GMSGGVDS) and Met-39. The tract at residues 99 to 101 (NPD) is interaction with target base in tRNA. The active-site Nucleophile is Cys-104. A disulfide bridge links Cys-104 with Cys-200. Residue Gly-128 participates in ATP binding. Residues 150–152 (KDQ) are interaction with tRNA. The active-site Cysteine persulfide intermediate is the Cys-200. An interaction with tRNA region spans residues 308-309 (RY).

Belongs to the MnmA/TRMU family.

The protein resides in the cytoplasm. It catalyses the reaction S-sulfanyl-L-cysteinyl-[protein] + uridine(34) in tRNA + AH2 + ATP = 2-thiouridine(34) in tRNA + L-cysteinyl-[protein] + A + AMP + diphosphate + H(+). Functionally, catalyzes the 2-thiolation of uridine at the wobble position (U34) of tRNA, leading to the formation of s(2)U34. This Bacillus thuringiensis (strain Al Hakam) protein is tRNA-specific 2-thiouridylase MnmA.